A 678-amino-acid chain; its full sequence is Glycine--tRNA ligase beta subunit (678 aa).

This sequence belongs to the class-II aminoacyl-tRNA synthetase family. In terms of assembly, tetramer of two alpha and two beta subunits.

The protein resides in the cytoplasm. It carries out the reaction tRNA(Gly) + glycine + ATP = glycyl-tRNA(Gly) + AMP + diphosphate. The sequence is that of Glycine--tRNA ligase beta subunit from Sulfurihydrogenibium sp. (strain YO3AOP1).